Reading from the N-terminus, the 450-residue chain is Glutamate--tRNA ligase 1 (450 aa).

Positions 7–17 (PSPTGYMHVGN) match the 'HIGH' region motif. The 'KMSKS' region signature appears at 236-240 (KISKR). Lys239 is an ATP binding site.

This sequence belongs to the class-I aminoacyl-tRNA synthetase family. Glutamate--tRNA ligase type 1 subfamily. In terms of assembly, monomer.

It localises to the cytoplasm. The enzyme catalyses tRNA(Glu) + L-glutamate + ATP = L-glutamyl-tRNA(Glu) + AMP + diphosphate. Catalyzes the attachment of glutamate to tRNA(Glu) in a two-step reaction: glutamate is first activated by ATP to form Glu-AMP and then transferred to the acceptor end of tRNA(Glu). This is Glutamate--tRNA ligase 1 from Anaplasma phagocytophilum (strain HZ).